The chain runs to 58 residues: Large ribosomal subunit protein uL30 (58 aa).

The protein belongs to the universal ribosomal protein uL30 family. As to quaternary structure, part of the 50S ribosomal subunit.

The sequence is that of Large ribosomal subunit protein uL30 from Pseudomonas fluorescens (strain ATCC BAA-477 / NRRL B-23932 / Pf-5).